Consider the following 284-residue polypeptide: NAD(P)H-hydrate epimerase (284 aa).

A mitochondrion-targeting transit peptide spans 1-55; that stretch reads MSGLRTLLGLGLLVSSSRFPRVVARGGPRCPGPAWWAARPMHLGDSTMAGGTVKY. The YjeF N-terminal domain maps to 61-271; it reads AQAVDEELFN…DLEKKYQLNL (211 aa). Residue 115-119 coordinates (6S)-NADPHX; sequence NNGGD. Asn116 is a K(+) binding site. Lys140 carries the post-translational modification N6-succinyllysine. Asp181 serves as a coordination point for K(+). Residues 185-191 and Asp214 each bind (6S)-NADPHX; that span reads GFSFKGA. Residue Ser217 participates in K(+) binding.

This sequence belongs to the NnrE/AIBP family. Homodimer. Interacts with APOA1 and APOA2. The cofactor is K(+). Post-translationally, undergoes physiological phosphorylation during sperm capacitation, downstream to PKA activation.

The protein resides in the mitochondrion. It localises to the secreted. It catalyses the reaction (6R)-NADHX = (6S)-NADHX. The catalysed reaction is (6R)-NADPHX = (6S)-NADPHX. In terms of biological role, catalyzes the epimerization of the S- and R-forms of NAD(P)HX, a damaged form of NAD(P)H that is a result of enzymatic or heat-dependent hydration. This is a prerequisite for the S-specific NAD(P)H-hydrate dehydratase to allow the repair of both epimers of NAD(P)HX. Accelerates cholesterol efflux from endothelial cells to high-density lipoprotein (HDL) and thereby regulates angiogenesis. In Monodelphis domestica (Gray short-tailed opossum), this protein is NAD(P)H-hydrate epimerase.